The primary structure comprises 320 residues: Lipoyl synthase (320 aa).

[4Fe-4S] cluster contacts are provided by Cys67, Cys72, Cys78, Cys93, Cys97, Cys100, and Ser307. Positions 79 to 296 constitute a Radical SAM core domain; it reads FNHGTATFMI…RDKANEMGFE (218 aa).

This sequence belongs to the radical SAM superfamily. Lipoyl synthase family. [4Fe-4S] cluster is required as a cofactor.

It localises to the cytoplasm. The catalysed reaction is [[Fe-S] cluster scaffold protein carrying a second [4Fe-4S](2+) cluster] + N(6)-octanoyl-L-lysyl-[protein] + 2 oxidized [2Fe-2S]-[ferredoxin] + 2 S-adenosyl-L-methionine + 4 H(+) = [[Fe-S] cluster scaffold protein] + N(6)-[(R)-dihydrolipoyl]-L-lysyl-[protein] + 4 Fe(3+) + 2 hydrogen sulfide + 2 5'-deoxyadenosine + 2 L-methionine + 2 reduced [2Fe-2S]-[ferredoxin]. Its pathway is protein modification; protein lipoylation via endogenous pathway; protein N(6)-(lipoyl)lysine from octanoyl-[acyl-carrier-protein]: step 2/2. Functionally, catalyzes the radical-mediated insertion of two sulfur atoms into the C-6 and C-8 positions of the octanoyl moiety bound to the lipoyl domains of lipoate-dependent enzymes, thereby converting the octanoylated domains into lipoylated derivatives. The chain is Lipoyl synthase from Haemophilus influenzae (strain PittEE).